Reading from the N-terminus, the 61-residue chain is Large ribosomal subunit protein bL32 (61 aa).

It belongs to the bacterial ribosomal protein bL32 family.

This chain is Large ribosomal subunit protein bL32, found in Ehrlichia canis (strain Jake).